A 114-amino-acid chain; its full sequence is Peroxisomal biogenesis factor 39 (114 aa).

Disordered stretches follow at residues 1–26 (MSWWQDMDQRGGVSSPSGALASAEPA) and 53–114 (ITAT…PRVS). Phosphoserine is present on S102.

Its subcellular location is the peroxisome. Functionally, may be a peroxin involved in the PTS2-mediated protein import pathway. This Mus musculus (Mouse) protein is Peroxisomal biogenesis factor 39 (Pex39).